The primary structure comprises 517 residues: Glycoprotein (517 aa).

An N-terminal signal peptide occupies residues 1–16 (MLSYLIFALAVSPILG). The Virion surface segment spans residues 17–474 (KIEIVFPQHT…FSGWRSSLMG (458 aa)). Intrachain disulfides connect Cys40–Cys304, Cys75–Cys108, Cys84–Cys130, Cys169–Cys174, Cys193–Cys240, and Cys235–Cys273. The interval 53 to 172 (TGIPVELTMP…HFIGGRCKGQ (120 aa)) is fusion peptide. The N-linked (GlcNAc...) asparagine; by host glycan is linked to Asn179. The interval 259-313 (DLDKTVRDLPHIKDCDLSSSIITPGEHATDISLISDVERILDYALCQNTWSKIES) is trimerization. N-linked (GlcNAc...) asparagine; by host glycosylation is present at Asn340. The interval 387–409 (EIGPNGVLKTKQGYKFPLHIIGT) is trimerization. The chain crosses the membrane as a helical span at residues 475–495 (VLAVIIGFVILMFLIKLIGVL). Residues 496–517 (SSLFRPKRRPIYKSDVEMAHFR) lie on the Intravirion side of the membrane.

The protein belongs to the vesiculovirus glycoprotein family. As to quaternary structure, homotrimer. Interacts with host LDL at target cell surface. Post-translationally, glycosylated by host. Palmitoylated by host.

It localises to the virion membrane. The protein resides in the host membrane. In terms of biological role, attaches the virus to host LDL receptors, inducing clathrin-dependent endocytosis of the virion. In the endosome, the acidic pH induces conformational changes in the glycoprotein trimer, which trigger fusion between virus and endosomal membrane. In Aedes (Bovine), this protein is Glycoprotein (G).